Consider the following 219-residue polypeptide: Large ribosomal subunit protein eL13 (219 aa).

The segment at 198 to 219 (KDAAENPDDVTKAPTAVKRNKT) is disordered.

It belongs to the eukaryotic ribosomal protein eL13 family. In terms of assembly, component of the 60S large ribosomal subunit (LSU).

It localises to the cytoplasm. Its function is as follows. Component of the ribosome, a large ribonucleoprotein complex responsible for the synthesis of proteins in the cell. The small ribosomal subunit (SSU) binds messenger RNAs (mRNAs) and translates the encoded message by selecting cognate aminoacyl-transfer RNA (tRNA) molecules. The large subunit (LSU) contains the ribosomal catalytic site termed the peptidyl transferase center (PTC), which catalyzes the formation of peptide bonds, thereby polymerizing the amino acids delivered by tRNAs into a polypeptide chain. The nascent polypeptides leave the ribosome through a tunnel in the LSU and interact with protein factors that function in enzymatic processing, targeting, and the membrane insertion of nascent chains at the exit of the ribosomal tunnel. As part of the LSU, it is probably required for its formation and the maturation of rRNAs. This is Large ribosomal subunit protein eL13 (RpL13) from Spodoptera frugiperda (Fall armyworm).